The chain runs to 59 residues: DNA-directed RNA polymerase subunit Rpo6 (59 aa).

It belongs to the archaeal Rpo6/eukaryotic RPB6 RNA polymerase subunit family. Part of the RNA polymerase complex.

It is found in the cytoplasm. The enzyme catalyses RNA(n) + a ribonucleoside 5'-triphosphate = RNA(n+1) + diphosphate. Its function is as follows. DNA-dependent RNA polymerase (RNAP) catalyzes the transcription of DNA into RNA using the four ribonucleoside triphosphates as substrates. The protein is DNA-directed RNA polymerase subunit Rpo6 of Halorubrum lacusprofundi (strain ATCC 49239 / DSM 5036 / JCM 8891 / ACAM 34).